The chain runs to 346 residues: Biotin synthase (346 aa).

Residues 38-256 form the Radical SAM core domain; the sequence is RQVQVSTLLS…IAVARIMMPT (219 aa). Residues cysteine 53, cysteine 57, and cysteine 60 each contribute to the [4Fe-4S] cluster site. Residues cysteine 97, cysteine 128, cysteine 188, and arginine 260 each coordinate [2Fe-2S] cluster.

Belongs to the radical SAM superfamily. Biotin synthase family. Homodimer. It depends on [4Fe-4S] cluster as a cofactor. [2Fe-2S] cluster serves as cofactor.

It catalyses the reaction (4R,5S)-dethiobiotin + (sulfur carrier)-SH + 2 reduced [2Fe-2S]-[ferredoxin] + 2 S-adenosyl-L-methionine = (sulfur carrier)-H + biotin + 2 5'-deoxyadenosine + 2 L-methionine + 2 oxidized [2Fe-2S]-[ferredoxin]. The protein operates within cofactor biosynthesis; biotin biosynthesis; biotin from 7,8-diaminononanoate: step 2/2. In terms of biological role, catalyzes the conversion of dethiobiotin (DTB) to biotin by the insertion of a sulfur atom into dethiobiotin via a radical-based mechanism. The sequence is that of Biotin synthase from Escherichia coli (strain SE11).